The primary structure comprises 519 residues: MLESIRVTEKLHWPEHELAKKFVLNAEEALITDSKRSFSSLSSGILKDTFTTGTSSYNVLLQSKEEKKHRSQKRFSSASSKQHRKPSKSPSSSHSKDPSRMTALVPGTGAGTWYCLDGQSAVFVTSSVPSPVKFTRDISITGSGLALPPKPKSKVKRRNLTRLPKPKQQPQLCRSFERGDDISGKKLCILTAIKPINLEKEKLRFFKSDYTYNPQFEYANPTLPGVLAKHSNASDRFLKQSINIMELTLQKYGSYEKFEQATGGSLLSKTRIWSHVRKYMVKEGCLGEIVVHLTEDLLSRASMTVVNGCPTLTINISTAREHWLEGMLRHEIGTHYFRGINNLQQPWNSWIGRKKHELKPNNPTEEGLASIHSVLFRKDPFLWRAALLYYTVYKASHMSFCELFKDIGKFVKDPNTRWDYCVRAKRGWTDTSEPGCFSKDQVYLDGVLQILRFRESIDFHLLTALGKVSYEDVDRLKELAVTENMRVPHFLHDHSRYMEHLERIMEVNELTDAELKNLI.

Positions 63-103 are disordered; that stretch reads SKEEKKHRSQKRFSSASSKQHRKPSKSPSSSHSKDPSRMTA. H330 is a binding site for Zn(2+). E331 functions as the Nucleophile in the catalytic mechanism. Zn(2+) is bound by residues H335 and E366.

Zn(2+) serves as cofactor.

Putative tyrosine carboxypeptidase. This chain is Putative tyrosine carboxypeptidase MATCAP2, found in Mus musculus (Mouse).